We begin with the raw amino-acid sequence, 121 residues long: MSITNEQILDAVAEMSVMQVVELIEAMEEKFGVTAAAAVVAGGASAEAAAEQTEFDVILTAAGANKVQVIKAVRGATGLGLKEAKGLVDSAPAALKEGVDKAEAEALKAQLEEAGASVEVK.

Belongs to the bacterial ribosomal protein bL12 family. As to quaternary structure, homodimer. Part of the ribosomal stalk of the 50S ribosomal subunit. Forms a multimeric L10(L12)X complex, where L10 forms an elongated spine to which 2 to 4 L12 dimers bind in a sequential fashion. Binds GTP-bound translation factors.

In terms of biological role, forms part of the ribosomal stalk which helps the ribosome interact with GTP-bound translation factors. Is thus essential for accurate translation. This Vibrio atlanticus (strain LGP32) (Vibrio splendidus (strain Mel32)) protein is Large ribosomal subunit protein bL12.